The sequence spans 246 residues: DNA polymerase sliding clamp 3 (246 aa).

This sequence belongs to the PCNA family. The subunits circularize to form a toroid; DNA passes through its center. Replication factor C (RFC) is required to load the toroid on the DNA. Forms dimeric complexes with PCNA1 and PCNA2, and trimeric complexes with PCNA123 and PCNA323; does not form homotrimers. Crystal structures show a heterotetramer of 2 PCNA2 and 2 PCNA3, which would be large enough to clamp a Holliday junction.

Functionally, sliding clamp subunit that acts as a moving platform for DNA processing. Responsible for tethering the catalytic subunit of DNA polymerase and other proteins to DNA during high-speed replication. Both trimeric complexes inhibit DNA ligase and both 3'-5' and 5'-3' activity of Hel308 (Hjm) helicase, but stimulate Hjc, the Holliday junction cleavage enzyme. In Sulfurisphaera tokodaii (strain DSM 16993 / JCM 10545 / NBRC 100140 / 7) (Sulfolobus tokodaii), this protein is DNA polymerase sliding clamp 3.